Reading from the N-terminus, the 172-residue chain is Stellate protein CG33237 (172 aa).

This sequence belongs to the casein kinase 2 subunit beta family. In terms of assembly, interacts in vitro with the casein kinase 2 alpha subunit (CkII-alpha). The relevance of such interaction is however unclear in vivo. Probably not expressed in wild-type flies. In males lacking the Y chromosome, it is testis-specific and constitutes the main component of star-shaped crystals.

Functionally, unknown. In males lacking the Y chromosome, its strong overexpression leads to the appearance of proteinaceous star-shaped crystals in the primary spermatocytes causing meiotic drive, possibly by interfering with normal casein kinase 2 activity. The polypeptide is Stellate protein CG33237 (Ste:CG33237) (Drosophila melanogaster (Fruit fly)).